The sequence spans 102 residues: Small ribosomal subunit protein uS10 (102 aa).

It belongs to the universal ribosomal protein uS10 family. In terms of assembly, part of the 30S ribosomal subunit.

Functionally, involved in the binding of tRNA to the ribosomes. In Gluconacetobacter diazotrophicus (strain ATCC 49037 / DSM 5601 / CCUG 37298 / CIP 103539 / LMG 7603 / PAl5), this protein is Small ribosomal subunit protein uS10.